The sequence spans 311 residues: Phosphoribosylaminoimidazole-succinocarboxamide synthase (311 aa).

This sequence belongs to the SAICAR synthetase family.

The enzyme catalyses 5-amino-1-(5-phospho-D-ribosyl)imidazole-4-carboxylate + L-aspartate + ATP = (2S)-2-[5-amino-1-(5-phospho-beta-D-ribosyl)imidazole-4-carboxamido]succinate + ADP + phosphate + 2 H(+). It participates in purine metabolism; IMP biosynthesis via de novo pathway; 5-amino-1-(5-phospho-D-ribosyl)imidazole-4-carboxamide from 5-amino-1-(5-phospho-D-ribosyl)imidazole-4-carboxylate: step 1/2. The polypeptide is Phosphoribosylaminoimidazole-succinocarboxamide synthase (Azoarcus sp. (strain BH72)).